The primary structure comprises 463 residues: Quinolone resistance protein NorB (463 aa).

The next 14 helical transmembrane spans lie at 17 to 37 (IGIV…VNVV), 53 to 73 (IAVS…GGLA), 86 to 106 (IILN…LLLI), 107 to 127 (IGRL…LSII), 142 to 162 (YWSI…GAVA), 165 to 185 (LGWR…LFLI), 201 to 221 (FDIK…ILIT), 230 to 250 (SLLF…FIVL), 273 to 293 (TASN…NTFV), 299 to 319 (YSSL…LIMI), 334 to 354 (PMLI…LTFL), 357 to 377 (ILYV…LGIY), 403 to 423 (MASA…YAIV), and 435 to 455 (IALW…LLLV).

This sequence belongs to the major facilitator superfamily. TCR/Tet family.

The protein localises to the cell membrane. Functionally, multidrug efflux pump that acts independently of NorA and is one of the factors that confers resistance against diverse quinolones and chemical compounds. Can facilitate bacterial survival in vivo when overexpressed in an abscess and may contribute to the relative resistance of staphylococcal abscesses to antimicrobial therapy. The polypeptide is Quinolone resistance protein NorB (norB) (Staphylococcus aureus (strain MW2)).